The chain runs to 427 residues: Homeotic protein caudal (427 aa).

A disordered region spans residues 104-273; that stretch reads QLMQQHHHHH…QPQPGKTRTK (170 aa). Residues 116–129 show a composition bias toward low complexity; the sequence is ASSSSASSGSSSSG. The span at 145–164 shows a compositional bias: gly residues; the sequence is GVGGAGGGGGVGGATDGGPG. The span at 183–195 shows a compositional bias: polar residues; sequence ITVSGSEISSPGA. Low complexity predominate over residues 209 to 243; that stretch reads HLSAVANNNNNNNNNNNSPSTHNNNNNNNSVSNNN. Threonine 245 carries the phosphothreonine modification. The short motif at 252 to 257 is the Antp-type hexapeptide element; the sequence is YFDWMK. Positions 273 to 332 form a DNA-binding region, homeobox; sequence KDKYRVVYTDFQRLELEKEYCTSRYITIRRKSELAQTLSLSERQVKIWFQNRRAKERKQN.

This sequence belongs to the Caudal homeobox family. In terms of tissue distribution, maternally localized in an anteroposterior gradient in the syncytial blastoderm. Also expressed in the pole cells. Zygotically localized in the primordia of the terminal abdominal segment, the hindgut and in the posterior midgut rudiment. Expressed in the gut, the gonads and parts of the genital disks of third instar larvae (at protein level).

It is found in the nucleus. Caudal (cad) is one of a number of transcription factors controlling segmentation of the embryo. Further transcriptional regulation via a 5' flanking region containing DNA replication-related elements (DRE) and by dref also regulated by trh and tgo via the CNS midline element. Alongside Bicoid (bcd), caudal forms concentration gradients down the anterior-posterior (A-P) axis providing positional information and subsequent induction of the gap genes. Plays a role in gastrulation/germ band extension, hindgut morphogenesis, positive regulation of cell proliferation, genital disk development and pattern formation. Acts as a key regulator of the Hox gene network and activates transcription via the downstream core promoter element (DPE) relative to the TATA box. Plays a role in the establishment of the hindgut and in the invagination of the hindgut primordium during gastrulation. These effects on the gut are achieved by acting combinatorially at the posterior of the embryo to activate transcription of different targets including fog, fkh and wg. Caudal is involved in regulation of proliferation through transactivation of the E2F gene. Postembryonically its function is mostly restricted to the intestine where it regulates antimicrobial peptide (AMP) levels preserving the normal gut flora. The protein is Homeotic protein caudal (cad) of Drosophila melanogaster (Fruit fly).